The sequence spans 943 residues: Receptor-like kinase TMK3 (943 aa).

The N-terminal stretch at 1–24 (MSNSHLGTLCFIISLLGLANFSLS) is a signal peptide. The Extracellular segment spans residues 25–482 (QTGLDDSTMQ…ETSKKSSNVK (458 aa)). N41 carries N-linked (GlcNAc...) asparagine glycosylation. The cysteines at positions 54 and 61 are disulfide-linked. LRR repeat units lie at residues 64 to 88 (SNRVTKIQLKQKGIRGTLPTNLQSL), 89 to 111 (SELVILELFLNRISGPIPDLSGL), 112 to 134 (SRLQTLNLHDNLFTSVPKNLFSG), 136 to 160 (SSLQEMYLENNPFDPWVIPDTVKEA), 162 to 183 (SLQNLTLSNCSIIGKIPDFFGS), 186 to 210 (LPSLTNLKLSQNGLEGELPMSFAGT), 212 to 232 (IQSLFLNGQKLNGSISVLGNM), 233 to 254 (TSLVEVSLQGNQFSGPIPDLSG), 255 to 279 (LVSLRVFNVRENQLTGVVPQSLVSL), and 281 to 301 (SLTTVNLTNNYLQGPTPLFGK). 2 N-linked (GlcNAc...) asparagine glycosylation sites follow: N165 and N170. N-linked (GlcNAc...) asparagine glycans are attached at residues N223 and N231. N-linked (GlcNAc...) asparagine glycosylation is present at N286. 2 disulfides stabilise this stretch: C315-C323 and C353-C361. LRR repeat units follow at residues 363 to 386 (GGNITVVNMRKQDLSGTISPSLAK), 387 to 410 (LTSLETINLADNKLSGHIPDELTT), and 411 to 438 (LSKLRLLDVSNNDFYGIPPKFRDTVTLV). N-linked (GlcNAc...) asparagine glycosylation is present at N365. Residues 441–476 (GNANMGKNGPNKTSDAPGASPGSKPSGGSDGSETSK) form a disordered region. A glycan (N-linked (GlcNAc...) asparagine) is linked at N451. Positions 454–467 (SDAPGASPGSKPSG) are enriched in low complexity. Residues 483-503 (IIVPVVGGVVGALCLVGLGVC) form a helical membrane-spanning segment. The Cytoplasmic portion of the chain corresponds to 504 to 943 (LYAKKRKRPA…ADSFTSVDGR (440 aa)). Residues 514-534 (RVQSPSSNMVIHPHHSGDNDD) are disordered. One can recognise a Protein kinase domain in the interval 585 to 866 (FSEENILGRG…AHIVNVLSSL (282 aa)). Residues 591–599 (LGRGGFGTV) and K613 contribute to the ATP site. The active-site Proton acceptor is the D714. The segment at 904 to 943 (QTADDSGSSSSAYGSKDNTQTSIPTRPSGFADSFTSVDGR) is disordered. A compositionally biased stretch (low complexity) spans 906–918 (ADDSGSSSSAYGS). The span at 919-928 (KDNTQTSIPT) shows a compositional bias: polar residues.

Belongs to the protein kinase superfamily. Ser/Thr protein kinase family. In terms of tissue distribution, expressed in roots, leaves, stems, siliques and flowers.

It is found in the membrane. It catalyses the reaction L-seryl-[protein] + ATP = O-phospho-L-seryl-[protein] + ADP + H(+). It carries out the reaction L-threonyl-[protein] + ATP = O-phospho-L-threonyl-[protein] + ADP + H(+). Involved in auxin signal transduction and cell expansion and proliferation regulation. This chain is Receptor-like kinase TMK3, found in Arabidopsis thaliana (Mouse-ear cress).